The chain runs to 254 residues: Protein Thf1 (254 aa).

Residues 183 to 217 adopt a coiled-coil conformation; that stretch reads SDKLQKDLDLYRSNLEKMEQARITMEEAIQADRRK. The span at 213–227 shows a compositional bias: basic and acidic residues; that stretch reads ADRRKREQREQEKLA. Positions 213–254 are disordered; sequence ADRRKREQREQEKLAKAAAAEAPAALEASSDNPEPETSETPS. The segment covering 228 to 240 has biased composition (low complexity); it reads KAAAAEAPAALEA. Acidic residues predominate over residues 245–254; sequence PEPETSETPS.

It belongs to the THF1 family.

Its function is as follows. May be involved in photosynthetic membrane biogenesis. This is Protein Thf1 from Synechococcus elongatus (strain ATCC 33912 / PCC 7942 / FACHB-805) (Anacystis nidulans R2).